Consider the following 283-residue polypeptide: MAEITASLVKELRERTGAGMMDCKKALTEANGDIELAIENMRKSGAIKAAKKAGNVAADGVIKTKIDGNYGIILEVNCQTDFVAKDAGFQAFADKVLDAAVAGKITDVDVLKAQFEEERVALVAKIGENINIRRVASLEGDVLGSYQHGARIGVLVAAKGADEELVKQLAMHVAASKPEFVKPEDVSAEVVEKEYQVQLDIAMQSGKPKEIAEKMVEGRMKKFTGEVSLTGQPFVMEPSKSVGQLLKEHNADVTGFIRFEVGEGIEKVETDFAAEVAAMSKQS.

The involved in Mg(2+) ion dislocation from EF-Tu stretch occupies residues 80–83; sequence TDFV.

Belongs to the EF-Ts family.

It is found in the cytoplasm. Its function is as follows. Associates with the EF-Tu.GDP complex and induces the exchange of GDP to GTP. It remains bound to the aminoacyl-tRNA.EF-Tu.GTP complex up to the GTP hydrolysis stage on the ribosome. This chain is Elongation factor Ts, found in Citrobacter koseri (strain ATCC BAA-895 / CDC 4225-83 / SGSC4696).